Reading from the N-terminus, the 251-residue chain is Triosephosphate isomerase (251 aa).

9 to 11 contributes to the substrate binding site; it reads NWK. The Electrophile role is filled by His-96. Glu-167 acts as the Proton acceptor in catalysis. Substrate-binding positions include Gly-173, Ser-213, and 234–235; that span reads GG.

Belongs to the triosephosphate isomerase family. Homodimer.

It localises to the cytoplasm. The enzyme catalyses D-glyceraldehyde 3-phosphate = dihydroxyacetone phosphate. It functions in the pathway carbohydrate biosynthesis; gluconeogenesis. It participates in carbohydrate degradation; glycolysis; D-glyceraldehyde 3-phosphate from glycerone phosphate: step 1/1. Functionally, involved in the gluconeogenesis. Catalyzes stereospecifically the conversion of dihydroxyacetone phosphate (DHAP) to D-glyceraldehyde-3-phosphate (G3P). This chain is Triosephosphate isomerase, found in Phocaeicola vulgatus (strain ATCC 8482 / DSM 1447 / JCM 5826 / CCUG 4940 / NBRC 14291 / NCTC 11154) (Bacteroides vulgatus).